Reading from the N-terminus, the 32-residue chain is CSDGLKGLNALGTLPRKGLNALGTLPWVDLYN.

The polypeptide is Putative leucine-rich repeat protein PS14 (Pinus strobus (Eastern white pine)).